Consider the following 151-residue polypeptide: UPF0178 protein PST_0536 (151 aa).

The protein belongs to the UPF0178 family.

This chain is UPF0178 protein PST_0536, found in Stutzerimonas stutzeri (strain A1501) (Pseudomonas stutzeri).